The primary structure comprises 218 residues: Large ribosomal subunit protein uL3 (218 aa).

Positions 124 to 162 (KRHGFSRGPMTHGSKNHREPGSTGAGTTPGRIYPGKRMA) are disordered.

The protein belongs to the universal ribosomal protein uL3 family. Part of the 50S ribosomal subunit. Forms a cluster with proteins L14 and L19.

One of the primary rRNA binding proteins, it binds directly near the 3'-end of the 23S rRNA, where it nucleates assembly of the 50S subunit. The protein is Large ribosomal subunit protein uL3 of Synechococcus sp. (strain CC9605).